We begin with the raw amino-acid sequence, 466 residues long: Cytochrome c-552 (466 aa).

Residues 1–27 (MVRILTKKSFALSALVAASLMASGAMA) form the signal peptide. Heme c is bound at residue histidine 87. Positions 115, 118, and 119 each coordinate heme. Residues cysteine 153, cysteine 156, histidine 157, cysteine 195, cysteine 198, and histidine 199 each contribute to the heme c site. Residues glutamate 201, tyrosine 202, lysine 250, and glutamine 252 each contribute to the Ca(2+) site. Residue tyrosine 202 participates in substrate binding. Histidine 253 is a binding site for substrate. Heme c contacts are provided by histidine 264, cysteine 271, cysteine 274, histidine 275, histidine 290, cysteine 303, cysteine 306, histidine 307, and histidine 382.

The protein belongs to the cytochrome c-552 family. Ca(2+) is required as a cofactor. Requires heme c as cofactor.

It localises to the periplasm. The enzyme catalyses 6 Fe(III)-[cytochrome c] + NH4(+) + 2 H2O = 6 Fe(II)-[cytochrome c] + nitrite + 8 H(+). It participates in nitrogen metabolism; nitrate reduction (assimilation). Its function is as follows. Catalyzes the reduction of nitrite to ammonia, consuming six electrons in the process. This chain is Cytochrome c-552, found in Shewanella woodyi (strain ATCC 51908 / MS32).